The chain runs to 321 residues: GDP-L-fucose synthase (321 aa).

Position 14–20 (14–20) interacts with NADP(+); the sequence is GGSGLVG. The active-site Proton donor/acceptor is Y143. NADP(+) is bound by residues K147, 170–173, and H186; that span reads PTNV. 4 residues coordinate substrate: K194, W208, R215, and D277.

This sequence belongs to the NAD(P)-dependent epimerase/dehydratase family. Fucose synthase subfamily. As to quaternary structure, homodimer.

The catalysed reaction is GDP-beta-L-fucose + NADP(+) = GDP-4-dehydro-alpha-D-rhamnose + NADPH + H(+). The protein operates within nucleotide-sugar biosynthesis; GDP-L-fucose biosynthesis via de novo pathway; GDP-L-fucose from GDP-alpha-D-mannose: step 2/2. Catalyzes the two-step NADP-dependent conversion of GDP-4-dehydro-6-deoxy-D-mannose to GDP-fucose, involving an epimerase and a reductase reaction. This chain is GDP-L-fucose synthase, found in Homo sapiens (Human).